The chain runs to 83 residues: RNA-binding protein Hfq (83 aa).

The 61-residue stretch at 10–70 (DAFLNQLRKE…ISTVSPSRPV (61 aa)) folds into the Sm domain.

Belongs to the Hfq family. As to quaternary structure, homohexamer.

RNA chaperone that binds small regulatory RNA (sRNAs) and mRNAs to facilitate mRNA translational regulation in response to envelope stress, environmental stress and changes in metabolite concentrations. Also binds with high specificity to tRNAs. The polypeptide is RNA-binding protein Hfq (Desulforudis audaxviator (strain MP104C)).